A 344-amino-acid chain; its full sequence is KRR1 small subunit processome component homolog (344 aa).

A KH domain is found at 125–193; the sequence is DIIKIGNLVH…VRDIVLETMN (69 aa). The segment covering 232 to 245 has biased composition (basic residues); that stretch reads NISKRKQPKVKKQK. Disordered stretches follow at residues 232–260 and 273–326; these read NISKRKQPKVKKQKKEYTPFPPSQPESKV and QEQK…TKVD. Positions 270–295 form a coiled coil; that stretch reads FLNQEQKQAKRNQGRTEKQKEAAKRQ. 2 stretches are compositionally biased toward basic and acidic residues: residues 283–302 and 315–326; these read GRTEKQKEAAKRQDERRNKD and RKKEDGSSTKVD.

It belongs to the KRR1 family. As to quaternary structure, monomer. Component of the ribosomal small subunit (SSU) processome.

The protein localises to the nucleus. The protein resides in the nucleolus. Its function is as follows. Required for 40S ribosome biogenesis. Involved in nucleolar processing of pre-18S ribosomal RNA and ribosome assembly. Binds to RNA. Required for female germline development, cell viability during eye development and for survival of dividing cells and epithelial cells during early wing disk development. The sequence is that of KRR1 small subunit processome component homolog from Drosophila yakuba (Fruit fly).